We begin with the raw amino-acid sequence, 310 residues long: Ribonuclease HIII (310 aa).

The 217-residue stretch at F90–K306 folds into the RNase H type-2 domain. Residues D96, E97, and D201 each coordinate a divalent metal cation.

It belongs to the RNase HII family. RnhC subfamily. It depends on Mn(2+) as a cofactor. The cofactor is Mg(2+).

The protein localises to the cytoplasm. It catalyses the reaction Endonucleolytic cleavage to 5'-phosphomonoester.. In terms of biological role, endonuclease that specifically degrades the RNA of RNA-DNA hybrids. The polypeptide is Ribonuclease HIII (Staphylococcus saprophyticus subsp. saprophyticus (strain ATCC 15305 / DSM 20229 / NCIMB 8711 / NCTC 7292 / S-41)).